The primary structure comprises 1910 residues: Endoribonuclease dcr-1 (1910 aa).

One can recognise a Helicase ATP-binding domain in the interval 20 to 201 (LLDKATKKNT…KLMEQLKKLE (182 aa)). 33 to 40 (LGTGSGKT) lines the ATP pocket. The short motif at 145-148 (DECH) is the DEAH box element. In terms of domain architecture, Helicase C-terminal spans 371 to 542 (EFQKERMKLE…TVNNPIEDDS (172 aa)). One can recognise a Dicer dsRNA-binding fold domain in the interval 571-667 (AIALINRYCS…LPKGRESIAK (97 aa)). The PAZ domain occupies 845–1003 (YVSEVVANME…LVPELMDIHP (159 aa)). Disordered regions lie at residues 951 to 988 (RIQN…VPHS), 1227 to 1248 (TASS…KQLT), and 1272 to 1309 (LEMS…PTNF). Polar residues-rich tracts occupy residues 970 to 988 (IPQA…VPHS) and 1227 to 1245 (TASS…SPPK). The stretch at 1245 to 1280 (KQLTKEEEQFKKLQNDLLKQAKERLEALEMSEDMEK) forms a coiled coil. Residues 1272-1286 (LEMSEDMEKPRRLED) are compositionally biased toward basic and acidic residues. Positions 1288–1304 (VNLEDYGDDQENQEDEN) are enriched in acidic residues. 2 consecutive RNase III domains span residues 1381 to 1589 (VSHI…LTLG) and 1643 to 1805 (FTQL…LDSG). 3 residues coordinate Mg(2+): E1682, D1791, and E1794. The region spanning 1833–1896 (SPIRELMEFE…AKRALKYLHQ (64 aa)) is the DRBM domain.

This sequence belongs to the helicase family. Dicer subfamily. In terms of assembly, component of the ERI/DICER complex at least composed of dcr-1, rrf-3 and eri-1. Interacts with pir-1. Mg(2+) is required as a cofactor. The cofactor is Mn(2+).

Its function is as follows. Component of the ERI/DICER complex which is involved in processing amplified double-stranded RNA (dsRNA) intermediates during small-RNA-mediated gene-silencing or RNA interference (RNAi). Involved in cleaving dsRNA in the RNAi pathway. It produces 21 to 23 bp dsRNAs (siRNAs) which target the selective destruction of homologous RNAs. Seems to process the precursor of the small temporal RNA let-7 which is involved in developmental timing. Required for avoidance behavior induced by small RNAs derived from pathogenic bacteria such as P.aeruginosa. Involved in innate immunity through its role in small RNA processing. Functionally, tDCR-1 acts as a deoxyribonuclease (DNase) initiating DNA fragmentation during apoptosis, upstream of nucleases cps-6, crn-2 and nuc-1. The sequence is that of Endoribonuclease dcr-1 from Caenorhabditis elegans.